The chain runs to 326 residues: MSFFHTRKYKLILRGLLCLAGCFLMNSCSSSRGNQPADESIYVLSMNRMICDCVSRITGDRVKNIVLIDGAIDPHSYEMVKGDEDRMAMSQLIFCNGLGLEHSASLRKHLEGNPKVVDLGQRLLNKNCFDLLSEEGFPDPHIWTDMRVWGAAVKEMAAALIQQFPQYEEDFQKNADQILSEMEELDRWAARSLSTIPEKNRYLVTGHNAFSYFTRRYLSSDAERVSGEWRSRCISPEGLSPEAQISIRDIMRVVEYISANDVEVVFLEDTLNQDALRKIVSCSKSGQKIRLAKSPLYSDNVCDNYFSTFQHNVRTITEELGGTVLE.

The signal sequence occupies residues 1 to 21 (MSFFHTRKYKLILRGLLCLAG). Residues His75, His141, His207, and Asp299 each contribute to the Fe(2+) site.

This sequence belongs to the bacterial solute-binding protein 9 family. Monomer.

The protein localises to the periplasm. In terms of biological role, part of the ATP-binding cassette (ABC) transport system YtgABCD involved in metal import. Binds Fe(2+), Mn(2+) and Ni(2+), with a preference for Fe(2+) and delivers them to the membrane permease for translocation into the cytoplasm. The protein is Metal-binding protein YtgA of Chlamydia trachomatis serovar D (strain ATCC VR-885 / DSM 19411 / UW-3/Cx).